We begin with the raw amino-acid sequence, 432 residues long: Argininosuccinate lyase (432 aa).

The protein belongs to the lyase 1 family. Argininosuccinate lyase subfamily.

It localises to the cytoplasm. It catalyses the reaction 2-(N(omega)-L-arginino)succinate = fumarate + L-arginine. It participates in amino-acid biosynthesis; L-arginine biosynthesis; L-arginine from L-ornithine and carbamoyl phosphate: step 3/3. The sequence is that of Argininosuccinate lyase from Xanthomonas euvesicatoria pv. vesicatoria (strain 85-10) (Xanthomonas campestris pv. vesicatoria).